Consider the following 433-residue polypeptide: Transcriptional enhancer factor TEF-5 (433 aa).

The span at 1–12 (MASNSWNASSSP) shows a compositional bias: polar residues. The disordered stretch occupies residues 1 to 35 (MASNSWNASSSPGEGREDGQDGMDKSLDNDAEGVW). The span at 14–28 (EGREDGQDGMDKSLD) shows a compositional bias: basic and acidic residues. The segment at residues 28–104 (DNDAEGVWSP…QVLARREISG (77 aa)) is a DNA-binding region (TEA). The transcriptional activation stretch occupies residues 171–433 (GPSQDIKPFA…QHHVYKLVKD (263 aa)).

In terms of tissue distribution, high levels in cardiac muscle, low in skeletal muscle. Intermediate levels in gizzard and lung, low levels in kidney.

The protein resides in the nucleus. In terms of biological role, transcription factor which plays a key role in the Hippo signaling pathway, a pathway involved in organ size control and tumor suppression by restricting proliferation and promoting apoptosis. The core of this pathway is composed of a kinase cascade wherein MST1/MST2, in complex with its regulatory protein SAV1, phosphorylates and activates LATS1/2 in complex with its regulatory protein MOB1, which in turn phosphorylates and inactivates YAP1 oncoprotein and WWTR1/TAZ. The sequence is that of Transcriptional enhancer factor TEF-5 (TEAD3) from Gallus gallus (Chicken).